We begin with the raw amino-acid sequence, 302 residues long: 4-diphosphocytidyl-2-C-methyl-D-erythritol kinase (302 aa).

The active site involves Lys-32. 115–125 (PMGGGVGGGSS) contributes to the ATP binding site. The active site involves Asp-157.

It belongs to the GHMP kinase family. IspE subfamily.

It catalyses the reaction 4-CDP-2-C-methyl-D-erythritol + ATP = 4-CDP-2-C-methyl-D-erythritol 2-phosphate + ADP + H(+). Its pathway is isoprenoid biosynthesis; isopentenyl diphosphate biosynthesis via DXP pathway; isopentenyl diphosphate from 1-deoxy-D-xylulose 5-phosphate: step 3/6. In terms of biological role, catalyzes the phosphorylation of the position 2 hydroxy group of 4-diphosphocytidyl-2C-methyl-D-erythritol. This is 4-diphosphocytidyl-2-C-methyl-D-erythritol kinase from Actinobacillus succinogenes (strain ATCC 55618 / DSM 22257 / CCUG 43843 / 130Z).